A 1703-amino-acid chain; its full sequence is Protein TIC 214 (1703 aa).

6 consecutive transmembrane segments (helical) span residues 39–61, 67–87, 90–110, 138–158, 174–194, and 220–240; these read YYGFLTALPIGPSQILSIRTFFL, GIICILGSMMGQFVILLSIYC, LYVMLVKPHLMTLLVIPYMFY, LLLDSFIFQLLNPILLPNPVL, FFLTSSLLGWLCGHILFINSI, and FSILISITFFLYLGRSPVPLI. Disordered regions lie at residues 615–643 and 1431–1494; these read GPRKGKLEDKEKEKEKAAQTQTEVKKERE and TKEP…WKSK. A coiled-coil region spans residues 618–660; sequence KGKLEDKEKEKEKAAQTQTEVKKEREKEKEERVIKRFQNQSDF. The span at 619 to 643 shows a compositional bias: basic and acidic residues; it reads GKLEDKEKEKEKAAQTQTEVKKERE.

Belongs to the TIC214 family. As to quaternary structure, part of the Tic complex.

The protein localises to the plastid. It is found in the chloroplast inner membrane. Functionally, involved in protein precursor import into chloroplasts. May be part of an intermediate translocation complex acting as a protein-conducting channel at the inner envelope. This Psilotum nudum (Whisk fern) protein is Protein TIC 214.